Reading from the N-terminus, the 267-residue chain is tRNA pseudouridine synthase A (267 aa).

Asp54 (nucleophile) is an active-site residue. A substrate-binding site is contributed by Tyr112.

It belongs to the tRNA pseudouridine synthase TruA family. Homodimer.

The enzyme catalyses uridine(38/39/40) in tRNA = pseudouridine(38/39/40) in tRNA. Functionally, formation of pseudouridine at positions 38, 39 and 40 in the anticodon stem and loop of transfer RNAs. The protein is tRNA pseudouridine synthase A of Bordetella avium (strain 197N).